Reading from the N-terminus, the 167-residue chain is Transcription antitermination protein NusB (167 aa).

It belongs to the NusB family.

Its function is as follows. Involved in transcription antitermination. Required for transcription of ribosomal RNA (rRNA) genes. Binds specifically to the boxA antiterminator sequence of the ribosomal RNA (rrn) operons. This Nitrosomonas europaea (strain ATCC 19718 / CIP 103999 / KCTC 2705 / NBRC 14298) protein is Transcription antitermination protein NusB.